A 1341-amino-acid polypeptide reads, in one-letter code: Subtilisin-like protease 2 (1341 aa).

The N-terminal stretch at 1–18 (MLNIIYVVSLILIKFIFY) is a signal peptide. Residues 19 to 686 (KECNNNNNYY…KLYNNKYSFL (668 aa)) constitute a propeptide, inhibition peptide. Disordered regions lie at residues 85–107 (EKKT…EKKK) and 143–171 (ADVS…NYKN). N-linked (GlcNAc...) asparagine glycans are attached at residues asparagine 165, asparagine 343, asparagine 449, asparagine 453, and asparagine 492. Residues 415 to 474 (KKSKKEKENTQQKGGNNPNVDINILNNNNNNNNNNNSNNNSNSMNDEEINYNNNNNNKES) form a disordered region. Positions 430–474 (NNPNVDINILNNNNNNNNNNNSNNNSNSMNDEEINYNNNNNNKES) are enriched in low complexity. A disordered region spans residues 499-530 (IYHNKNDNSYKNKKEGTGKNNDNNDPNNNNNK). The span at 502–515 (NKNDNSYKNKKEGT) shows a compositional bias: basic and acidic residues. A compositionally biased stretch (low complexity) spans 517–530 (KNNDNNDPNNNNNK). 3 N-linked (GlcNAc...) asparagine glycosylation sites follow: asparagine 550, asparagine 641, and asparagine 728. Residues 687 to 1136 (NKFLNIEPLI…LYNLYEYDSH (450 aa)) lie on the Extracellular side of the membrane. Positions 726-1019 (TWNLSIIRVF…DSLVNAEGAV (294 aa)) constitute a Peptidase S8 domain. Active-site charge relay system residues include aspartate 754 and histidine 797. Asparagine 820, asparagine 856, asparagine 892, and asparagine 950 each carry an N-linked (GlcNAc...) asparagine glycan. The Charge relay system role is filled by serine 960. Asparagine 1009 and asparagine 1105 each carry an N-linked (GlcNAc...) asparagine glycan. Residues 1137–1157 (YLLASVILFFLALLSIFVGMI) form a helical membrane-spanning segment. At 1158-1341 (YMKSRKHSDK…MNQLDDMFMK (184 aa)) the chain is on the cytoplasmic side.

Belongs to the peptidase S8 family. Proteolytically cleaved at the N-terminus to generate a 74kDa intermediate which is further processed into a 72kDa form. The first maturation cleavage is autocatalytic, occurs in the ER and is necessary for the subsequent SUB2 trafficking to the microneme. The second cleavage may be mediated by PMX/plasmepsin X.

The protein localises to the cell membrane. It localises to the cytoplasmic vesicle. The protein resides in the secretory vesicle. Its subcellular location is the microneme membrane. The enzyme catalyses Hydrolysis of proteins with broad specificity for peptide bonds, and a preference for a large uncharged residue in P1. Hydrolyzes peptide amides.. Its activity is regulated as follows. Activation may be calcium-dependent. Inhibited by the non-covalent interaction with the cleaved propeptide. Its function is as follows. Serine protease which plays an essential role in the shedding of AMA1, MSP1 and MSP7 from the surface of the invading merozoite; this step is essential for productive invasion and the release of the adhesion between the erythrocyte and the merozoite. May cleave TRAMP/PTTRAMP, thereby shedding TRAMP from the merozoite surface during erythrocyte invasion. The polypeptide is Subtilisin-like protease 2 (Plasmodium falciparum (isolate 3D7)).